Consider the following 102-residue polypeptide: Aspartyl/glutamyl-tRNA(Asn/Gln) amidotransferase subunit C (102 aa).

It belongs to the GatC family. In terms of assembly, heterotrimer of A, B and C subunits.

It carries out the reaction L-glutamyl-tRNA(Gln) + L-glutamine + ATP + H2O = L-glutaminyl-tRNA(Gln) + L-glutamate + ADP + phosphate + H(+). It catalyses the reaction L-aspartyl-tRNA(Asn) + L-glutamine + ATP + H2O = L-asparaginyl-tRNA(Asn) + L-glutamate + ADP + phosphate + 2 H(+). Allows the formation of correctly charged Asn-tRNA(Asn) or Gln-tRNA(Gln) through the transamidation of misacylated Asp-tRNA(Asn) or Glu-tRNA(Gln) in organisms which lack either or both of asparaginyl-tRNA or glutaminyl-tRNA synthetases. The reaction takes place in the presence of glutamine and ATP through an activated phospho-Asp-tRNA(Asn) or phospho-Glu-tRNA(Gln). The polypeptide is Aspartyl/glutamyl-tRNA(Asn/Gln) amidotransferase subunit C (Lactobacillus acidophilus (strain ATCC 700396 / NCK56 / N2 / NCFM)).